A 400-amino-acid chain; its full sequence is Elongation factor Tu (400 aa).

The 200-residue stretch at lysine 10–glutamine 209 folds into the tr-type G domain. Positions glycine 19–threonine 26 are G1. Residue glycine 19–threonine 26 participates in GTP binding. Threonine 26 is a Mg(2+) binding site. The tract at residues glycine 60 to asparagine 64 is G2. Residues aspartate 81–glycine 84 form a G3 region. Residues aspartate 81–histidine 85 and asparagine 136–aspartate 139 contribute to the GTP site. Residues asparagine 136 to aspartate 139 form a G4 region. Residues serine 174–leucine 176 form a G5 region.

It belongs to the TRAFAC class translation factor GTPase superfamily. Classic translation factor GTPase family. EF-Tu/EF-1A subfamily. As to quaternary structure, monomer.

Its subcellular location is the cytoplasm. The catalysed reaction is GTP + H2O = GDP + phosphate + H(+). Its function is as follows. GTP hydrolase that promotes the GTP-dependent binding of aminoacyl-tRNA to the A-site of ribosomes during protein biosynthesis. The polypeptide is Elongation factor Tu (Caldicellulosiruptor saccharolyticus (strain ATCC 43494 / DSM 8903 / Tp8T 6331)).